Reading from the N-terminus, the 246-residue chain is UPF0246 protein stu1967 (246 aa).

It belongs to the UPF0246 family.

The protein is UPF0246 protein stu1967 of Streptococcus thermophilus (strain ATCC BAA-250 / LMG 18311).